The following is a 181-amino-acid chain: ATP synthase subunit delta (181 aa).

Belongs to the ATPase delta chain family. In terms of assembly, F-type ATPases have 2 components, F(1) - the catalytic core - and F(0) - the membrane proton channel. F(1) has five subunits: alpha(3), beta(3), gamma(1), delta(1), epsilon(1). F(0) has three main subunits: a(1), b(2) and c(10-14). The alpha and beta chains form an alternating ring which encloses part of the gamma chain. F(1) is attached to F(0) by a central stalk formed by the gamma and epsilon chains, while a peripheral stalk is formed by the delta and b chains.

It is found in the cell inner membrane. Functionally, f(1)F(0) ATP synthase produces ATP from ADP in the presence of a proton or sodium gradient. F-type ATPases consist of two structural domains, F(1) containing the extramembraneous catalytic core and F(0) containing the membrane proton channel, linked together by a central stalk and a peripheral stalk. During catalysis, ATP synthesis in the catalytic domain of F(1) is coupled via a rotary mechanism of the central stalk subunits to proton translocation. Its function is as follows. This protein is part of the stalk that links CF(0) to CF(1). It either transmits conformational changes from CF(0) to CF(1) or is implicated in proton conduction. The chain is ATP synthase subunit delta from Cupriavidus taiwanensis (strain DSM 17343 / BCRC 17206 / CCUG 44338 / CIP 107171 / LMG 19424 / R1) (Ralstonia taiwanensis (strain LMG 19424)).